Here is a 204-residue protein sequence, read N- to C-terminus: Large ribosomal subunit protein eL15A (204 aa).

Positions 164–185 (LTATGKKSRGINKGHKFNNTKA) are disordered. Positions 169 to 185 (KKSRGINKGHKFNNTKA) are enriched in basic residues.

This sequence belongs to the eukaryotic ribosomal protein eL15 family. In terms of assembly, component of the large ribosomal subunit (LSU). Mature yeast ribosomes consist of a small (40S) and a large (60S) subunit. The 40S small subunit contains 1 molecule of ribosomal RNA (18S rRNA) and 33 different proteins (encoded by 57 genes). The large 60S subunit contains 3 rRNA molecules (25S, 5.8S and 5S rRNA) and 46 different proteins (encoded by 81 genes).

The protein localises to the cytoplasm. In terms of biological role, component of the ribosome, a large ribonucleoprotein complex responsible for the synthesis of proteins in the cell. The small ribosomal subunit (SSU) binds messenger RNAs (mRNAs) and translates the encoded message by selecting cognate aminoacyl-transfer RNA (tRNA) molecules. The large subunit (LSU) contains the ribosomal catalytic site termed the peptidyl transferase center (PTC), which catalyzes the formation of peptide bonds, thereby polymerizing the amino acids delivered by tRNAs into a polypeptide chain. The nascent polypeptides leave the ribosome through a tunnel in the LSU and interact with protein factors that function in enzymatic processing, targeting, and the membrane insertion of nascent chains at the exit of the ribosomal tunnel. The sequence is that of Large ribosomal subunit protein eL15A from Saccharomyces cerevisiae (strain ATCC 204508 / S288c) (Baker's yeast).